Here is an 89-residue protein sequence, read N- to C-terminus: Small ribosomal subunit protein uS15c (89 aa).

The protein belongs to the universal ribosomal protein uS15 family. As to quaternary structure, part of the 30S ribosomal subunit.

The protein localises to the plastid. This chain is Small ribosomal subunit protein uS15c (rps15), found in Aneura mirabilis (Parasitic liverwort).